The sequence spans 347 residues: MNPMTSTILLMTIMSGTSIVLMSSHWFMTWLGFEMNMMAIIPILMKNYNPRSMEAATKYFLTQATASMILVLAIIINLMHSGQWTITITENITASTLITIALVMKLGLAPFHFWVPEVTQGVSLSSGLILLTWQKIAPLSLLYQIYPSINTNLLLTMSLLSIMIGGWGGLNQTQLRKIMAYSSIAHMGWMIVIMIYNPNLSLLNLFIYIMMTSSMFMLLIANSATSTSSLSQSWNINPTITTMMMATLLSLGGLPPLTGFAPKWMIIQELTKNNSVILPTLMAILALLNLFFYMRLTYSTALTMFPTMNNMKLMWQFQPTSMTPMMTMLISISTLALPLTPLFISLS.

A run of 11 helical transmembrane segments spans residues 3-23, 25-45, 59-79, 96-116, 122-142, 149-169, 178-198, 200-220, 240-260, 274-294, and 326-346; these read PMTS…VLMS, HWFM…PILM, YFLT…INLM, TLIT…FWVP, VSLS…LSLL, INTN…GWGG, IMAY…IYNP, LSLL…MLLI, ITTM…LTGF, NSVI…FFYM, and MTML…FISL.

The protein belongs to the complex I subunit 2 family. Core subunit of respiratory chain NADH dehydrogenase (Complex I) which is composed of 45 different subunits. Interacts with TMEM242.

It is found in the mitochondrion inner membrane. The enzyme catalyses a ubiquinone + NADH + 5 H(+)(in) = a ubiquinol + NAD(+) + 4 H(+)(out). In terms of biological role, core subunit of the mitochondrial membrane respiratory chain NADH dehydrogenase (Complex I) which catalyzes electron transfer from NADH through the respiratory chain, using ubiquinone as an electron acceptor. Essential for the catalytic activity and assembly of complex I. This is NADH-ubiquinone oxidoreductase chain 2 from Sylvisorex granti (Grant's forest shrew).